The following is a 729-amino-acid chain: MSKFIEPSVEEIKLEKVYQDMGLSDQEYEKVCDILGRQPNFTETGIFSVMWSEHCSYKHSKPFLKQFPTSGEHVLMGPGEGAGVVDIGDNQAVVFKVESHNHPSAIEPYQGAATGVGGIIRDIVSIGARPINLLNSLRFGELDNKQNQRLLKGVVKGIGGYGNCIGIPTTAGEIEFDERYDGNPLVNAMCVGVINHDMIQKGTAKGVGNSVIYVGLKTGRDGIHGATFASEELTEESESKRPSVQIGDPFVGKKLMEATLEAITFDELVGIQDMGAAGLTSSSSEMAAKGGSGLHLRLEQVPTREPGISPYEMMLSETQERMLLVVEKGTEQKFLDLFDKHELDSAVIGEVTDTNRFVLTYDDEVYADIPVEPLADEAPVFILEGEEKNYNTSKNDYTHIDVKDTFFKLLKHPTIASKHYLYDQYDQQVGANTIIKPGLQASVVRVEGTNKAIASTIDGEARYVYNNPYEGGKMVVAEAYRNLIAVGATPLAMTDCLNYGSPEKKEIYQQLIDSTKGMAEACDILKTPVVSGNVSLYNETKGTSIFPTPVVGMVGLIENVNYLNDFEPQVGDKLYLIGDTKDDFGGSQLEKLIYGKVNHEFESLDLSSESEKGESIKTAIREGVLSHVQTVGKGGLLITLAKLSAHYGLGLKSSIDITNTQLFSETQGRYVVSVKSGKTLNIDNAIEIGLLTDSDNFKVTTPYTEISENVSDIKQIWEGAIAQCLTTQD.

The active site involves histidine 54. Tyrosine 57 and lysine 96 together coordinate ATP. Glutamate 98 is a binding site for Mg(2+). Residues serine 99–histidine 102 and arginine 121 contribute to the substrate site. The active-site Proton acceptor is histidine 100. Aspartate 122 lines the Mg(2+) pocket. Glutamine 245 contributes to the substrate binding site. Aspartate 273 lines the Mg(2+) pocket. Glutamate 317–glutamine 319 is a binding site for substrate. Residues aspartate 495 and glycine 532 each contribute to the ATP site. Asparagine 533 provides a ligand contact to Mg(2+). A substrate-binding site is contributed by serine 535.

The protein belongs to the FGAMS family. In terms of assembly, monomer. Part of the FGAM synthase complex composed of 1 PurL, 1 PurQ and 2 PurS subunits.

Its subcellular location is the cytoplasm. The enzyme catalyses N(2)-formyl-N(1)-(5-phospho-beta-D-ribosyl)glycinamide + L-glutamine + ATP + H2O = 2-formamido-N(1)-(5-O-phospho-beta-D-ribosyl)acetamidine + L-glutamate + ADP + phosphate + H(+). It functions in the pathway purine metabolism; IMP biosynthesis via de novo pathway; 5-amino-1-(5-phospho-D-ribosyl)imidazole from N(2)-formyl-N(1)-(5-phospho-D-ribosyl)glycinamide: step 1/2. Its function is as follows. Part of the phosphoribosylformylglycinamidine synthase complex involved in the purines biosynthetic pathway. Catalyzes the ATP-dependent conversion of formylglycinamide ribonucleotide (FGAR) and glutamine to yield formylglycinamidine ribonucleotide (FGAM) and glutamate. The FGAM synthase complex is composed of three subunits. PurQ produces an ammonia molecule by converting glutamine to glutamate. PurL transfers the ammonia molecule to FGAR to form FGAM in an ATP-dependent manner. PurS interacts with PurQ and PurL and is thought to assist in the transfer of the ammonia molecule from PurQ to PurL. This Staphylococcus aureus (strain bovine RF122 / ET3-1) protein is Phosphoribosylformylglycinamidine synthase subunit PurL.